A 241-amino-acid chain; its full sequence is Orotidine 5'-phosphate decarboxylase (241 aa).

Residues D19, K41, 69-78 (DLKFFDIPAT), T124, R185, Q194, G214, and R215 contribute to the substrate site. K71 functions as the Proton donor in the catalytic mechanism.

Belongs to the OMP decarboxylase family. Type 1 subfamily. As to quaternary structure, homodimer.

It carries out the reaction orotidine 5'-phosphate + H(+) = UMP + CO2. The protein operates within pyrimidine metabolism; UMP biosynthesis via de novo pathway; UMP from orotate: step 2/2. Catalyzes the decarboxylation of orotidine 5'-monophosphate (OMP) to uridine 5'-monophosphate (UMP). In Stenotrophomonas maltophilia (strain K279a), this protein is Orotidine 5'-phosphate decarboxylase.